Here is a 142-residue protein sequence, read N- to C-terminus: Large ribosomal subunit protein uL11 (142 aa).

This sequence belongs to the universal ribosomal protein uL11 family. Part of the ribosomal stalk of the 50S ribosomal subunit. Interacts with L10 and the large rRNA to form the base of the stalk. L10 forms an elongated spine to which L12 dimers bind in a sequential fashion forming a multimeric L10(L12)X complex. In terms of processing, one or more lysine residues are methylated.

Forms part of the ribosomal stalk which helps the ribosome interact with GTP-bound translation factors. The polypeptide is Large ribosomal subunit protein uL11 (Mycobacterium sp. (strain JLS)).